Consider the following 562-residue polypeptide: Putative transport protein YE1478 (562 aa).

A run of 6 helical transmembrane segments spans residues 8–28 (LLNGNYILLLFVVLALGLCLG), 32–52 (LGPIQLGNAIGVLVVSLLLGQ), 66–86 (FMLFIFCVGVEAGPNFFSIFF), 94–114 (MLALVMVGSAMVLALGLGKLF), 118–138 (IGLTAGMLAGSMTSTPVLVGA), and 158–178 (NLSLGYALTYLIGLVSLILGA). RCK C-terminal domains follow at residues 202–288 (LDTD…SFRN) and 290–373 (KEVF…KIGF). Transmembrane regions (helical) follow at residues 383–403 (LLAFCAFFILGLMIGLITFQF), 406–426 (FSFGIGNAAGLLMAGIMLGFL), 447–467 (FGLMVFMAGVGLSAGGGINSS), 475–495 (MLISGLIVSLVPVVICFIFGA), and 541–561 (IANVLLTLAGSLIVIVWPGIL).

Belongs to the AAE transporter (TC 2.A.81) family. YbjL subfamily.

It localises to the cell membrane. This Yersinia enterocolitica serotype O:8 / biotype 1B (strain NCTC 13174 / 8081) protein is Putative transport protein YE1478.